A 509-amino-acid polypeptide reads, in one-letter code: O-acetyltransferase anaAT (509 aa).

The protein belongs to the fumigaclavine B O-acetyltransferase family. In terms of assembly, monomer.

The catalysed reaction is (2R,3S,11R)-aszonalenin + acetyl-CoA = (2R,3S,11R)-acetylaszonalenin + CoA. The protein operates within alkaloid biosynthesis. O-acetyltransferase; part of the gene cluster that mediates the biosynthesis of the prenylated pyrroloindoline diketopiperazine acetylaszonalenin. The first step in the pathway is the formation of (R)-benzodiazepinedione by condensation of tryptophan and anthranilic acid catalyzed by the non-ribosomal peptide synthetase anaPS. The prenyltransferase anaPT then converts (R)-benzodiazepinedione to aszonalenin in the presence of dimethylallyl diphosphate (DMAPP) via C3-prenylation. The last step in the biosynthesis of acetylaszonalenin via acetylation of aszonalenin at position N1 catalyzed by anaAT. The protein is O-acetyltransferase anaAT of Neosartorya fischeri (strain ATCC 1020 / DSM 3700 / CBS 544.65 / FGSC A1164 / JCM 1740 / NRRL 181 / WB 181) (Aspergillus fischerianus).